The chain runs to 513 residues: Putative ribose/galactose/methyl galactoside import ATP-binding protein 2 (513 aa).

ABC transporter domains lie at 24-260 (LSAE…VGRE) and 270-510 (VPIG…VMEL). 56-63 (GENGAGKS) is an ATP binding site.

The protein belongs to the ABC transporter superfamily. Carbohydrate importer 2 (CUT2) (TC 3.A.1.2) family.

Its subcellular location is the cell inner membrane. The enzyme catalyses D-ribose(out) + ATP + H2O = D-ribose(in) + ADP + phosphate + H(+). It catalyses the reaction D-galactose(out) + ATP + H2O = D-galactose(in) + ADP + phosphate + H(+). Functionally, part of an ABC transporter complex involved in carbohydrate import. Could be involved in ribose, galactose and/or methyl galactoside import. Responsible for energy coupling to the transport system. This is Putative ribose/galactose/methyl galactoside import ATP-binding protein 2 from Rhizobium etli (strain ATCC 51251 / DSM 11541 / JCM 21823 / NBRC 15573 / CFN 42).